Consider the following 222-residue polypeptide: MVLAEDLECLKALALMGGMREPVFISSQTLGEVLETSPQTASRRLKALEGQRLISRTLNPDGQHITVTKEGEDGLRREYAEYCRLFAHEGGHYTLPGIVISGLGEGRYYMSLEPYKKQFLRHLGFEPYPGTLNLRLSGSDIPTRKKIDSLTWIPIHGFSAEGRTFGEVRCMPCRINDIPCGIVVPGRSHYPEDIVEVIAPVGLRDALGVKENDRVNVEVAYD.

Residues 1 to 92 (MVLAEDLECL…CRLFAHEGGH (92 aa)) are H-T-H motif-like. The tract at residues 93 to 222 (YTLPGIVISG…DRVNVEVAYD (130 aa)) is riboflavin kinase. 102-107 (GLGEGR) is a CDP binding site. Residues T131 and N133 each contribute to the Mg(2+) site. FMN is bound by residues S188 and E196. A CDP-binding site is contributed by 201-204 (VGLR).

The protein belongs to the archaeal riboflavin kinase family. Mg(2+) serves as cofactor.

It catalyses the reaction riboflavin + CTP = CDP + FMN + H(+). Its pathway is cofactor biosynthesis; FMN biosynthesis; FMN from riboflavin (CTP route): step 1/1. In terms of biological role, catalyzes the CTP-dependent phosphorylation of riboflavin (vitamin B2) to form flavin mononucleotide (FMN). This chain is Riboflavin kinase (ribK), found in Methanoregula boonei (strain DSM 21154 / JCM 14090 / 6A8).